A 926-amino-acid polypeptide reads, in one-letter code: Serine/threonine-protein kinase pakE (926 aa).

The span at 36–55 shows a compositional bias: polar residues; sequence SSRELPTQDSSTKTSNITTP. Disordered regions lie at residues 36–257 and 546–576; these read SSRE…RPKL and QLNNNNNNNNNNNNNNNNNNNNNNNNITTTT. The segment covering 56–107 has biased composition (low complexity); the sequence is NNNNNNNNNNNNNNNNNNNNNNNNNNNNNNNNNNNNNNNNNNNNNNNNNNNN. Residues 108-117 are compositionally biased toward polar residues; the sequence is TPTSLNSSWK. Over residues 134 to 173 the composition is skewed to low complexity; that stretch reads NNNNNVGSPNNQSTSQTNHQQPPPQQLQQQQSLSSTSTPS. Polar residues predominate over residues 183–204; it reads RRNVTSPNLTRSDPTVPITNSR. Positions 215–253 are enriched in low complexity; that stretch reads PQFQLNNLNFDDNNDHSTTTTNNNNNNNNNNSNNNNNNN. Residues 534 to 567 are a coiled coil; sequence LDFEKELKENQQQLNNNNNNNNNNNNNNNNNNNN. The Protein kinase domain occupies 650–903; the sequence is FEFKEKLGQG…VIDLLSHDFI (254 aa). Residues 656 to 664 and lysine 679 each bind ATP; that span reads LGQGGYGAV. Aspartate 771 (proton acceptor) is an active-site residue.

This sequence belongs to the protein kinase superfamily. STE Ser/Thr protein kinase family. STE20 subfamily. Mg(2+) is required as a cofactor.

The enzyme catalyses L-seryl-[protein] + ATP = O-phospho-L-seryl-[protein] + ADP + H(+). It catalyses the reaction L-threonyl-[protein] + ATP = O-phospho-L-threonyl-[protein] + ADP + H(+). In terms of biological role, may play a role in responding to changes in chemoattractant levels. The protein is Serine/threonine-protein kinase pakE of Dictyostelium discoideum (Social amoeba).